The sequence spans 345 residues: Uroporphyrinogen decarboxylase (345 aa).

Substrate is bound by residues 27–31 (RQAGR), aspartate 77, tyrosine 152, serine 207, and histidine 323.

It belongs to the uroporphyrinogen decarboxylase family. Homodimer.

The protein localises to the cytoplasm. It catalyses the reaction uroporphyrinogen III + 4 H(+) = coproporphyrinogen III + 4 CO2. The protein operates within porphyrin-containing compound metabolism; protoporphyrin-IX biosynthesis; coproporphyrinogen-III from 5-aminolevulinate: step 4/4. Catalyzes the decarboxylation of four acetate groups of uroporphyrinogen-III to yield coproporphyrinogen-III. This is Uroporphyrinogen decarboxylase from Maricaulis maris (strain MCS10) (Caulobacter maris).